Consider the following 328-residue polypeptide: Phosphate acetyltransferase (328 aa).

The protein belongs to the phosphate acetyltransferase and butyryltransferase family.

Its subcellular location is the cytoplasm. It carries out the reaction acetyl-CoA + phosphate = acetyl phosphate + CoA. The protein operates within metabolic intermediate biosynthesis; acetyl-CoA biosynthesis; acetyl-CoA from acetate: step 2/2. The polypeptide is Phosphate acetyltransferase (pta) (Staphylococcus aureus (strain MRSA252)).